Consider the following 638-residue polypeptide: Mediator of RNA polymerase II transcription subunit 17 (638 aa).

Positions 1-21 are disordered; sequence MSDSFNLPLRPLTEKRERPDP.

This sequence belongs to the Mediator complex subunit 17 family. As to quaternary structure, component of the Mediator complex.

Its subcellular location is the nucleus. Functionally, component of the Mediator complex, a coactivator involved in the regulated transcription of nearly all RNA polymerase II-dependent genes. Mediator functions as a bridge to convey information from gene-specific regulatory proteins to the basal RNA polymerase II transcription machinery. Mediator is recruited to promoters by direct interactions with regulatory proteins and serves as a scaffold for the assembly of a functional preinitiation complex with RNA polymerase II and the general transcription factors. This Aspergillus oryzae (strain ATCC 42149 / RIB 40) (Yellow koji mold) protein is Mediator of RNA polymerase II transcription subunit 17 (srb4).